The primary structure comprises 579 residues: MFS-type transporter olcL (579 aa).

Polar residues predominate over residues methionine 1–threonine 24. A disordered region spans residues methionine 1–aspartate 75. Basic and acidic residues predominate over residues valine 25 to threonine 35. Over residues serine 36–glutamine 54 the composition is skewed to polar residues. Residue asparagine 45 is glycosylated (N-linked (GlcNAc...) asparagine). Helical transmembrane passes span leucine 85 to isoleucine 105, glycine 121 to phenylalanine 141, alanine 159 to isoleucine 179, isoleucine 183 to valine 203, leucine 214 to threonine 234, tryptophan 241 to phenylalanine 261, leucine 282 to glycine 302, serine 310 to valine 330, and leucine 355 to phenylalanine 375. Residue asparagine 380 is glycosylated (N-linked (GlcNAc...) asparagine). 5 helical membrane passes run leucine 388 to valine 408, isoleucine 411 to leucine 431, phenylalanine 439 to leucine 459, isoleucine 479 to phenylalanine 501, and phenylalanine 553 to isoleucine 573.

Belongs to the major facilitator superfamily. TCR/Tet family.

The protein localises to the peroxisome membrane. MFS-type transporter; part of the gene cluster that mediates the biosynthesis of 15-deoxyoxalicine B. The first step of the pathway is the synthesis of nicotinyl-CoA from nicotinic acid by the nicotinic acid-CoA ligase olcI. Nicotinyl-CoA is then a substrate of polyketide synthase olcA to produce 4-hydroxy-6-(3-pyridinyl)-2H-pyran-2-one (HPPO) which is further prenylated by the polyprenyl transferase olcH to yield geranylgeranyl-HPPO. Geranylgeranyl pyrophosphate is provided by the cluster-specific geranylgeranyl pyrophosphate synthase olcC. The FAD-dependent monooxygenase olcE catalyzes the epoxidation of geranylgeranyl-HPPO and the terpene cyclase olcD catalyzes the cyclization of the terpenoid component, resulting in the formation of the tricyclic terpene moiety seen in predecaturin E. The cytochrome P450 monooxygenase then catalyzes the allylic oxidation of predecaturin E, which is followed by spirocylization with concomitant loss of one molecule of water to form decaturin E. Decaturin E is the substrate of the cytochrome P450 monooxygenase olcJ which hydroxylates it at the C-29 position to form decaturin F. The short-chain dehydrogenase/reductase olcF may catalyze the oxidation of decaturin F to generate the 29-hydroxyl-27-one intermediate, and subsequent hemiacetal formation probably leads to the formation of decaturin C. The dioxygenase olcK may be a peroxisomal enzyme that catalyzes the hydroxylation of decaturin C into decaturin A once decaturin C is shuttled into the peroxisome by the MFS transporter olcL. Finally the cytochrome P450 monooxygenase olcB catalyzes the oxidative rearrangement to yield 15-deoxyoxalicine B. In the absence of olcJ, decaturin E may be shunted to a pathway in which it is oxidized to a ketone, possibly by olcF, to form decaturin D, which undergoes further allylic oxidation to yield decaturin G. Moreover, in the absence of oclK or oclL, oclB can convert decaturin C into 15-deoxyoxalicine A. This is MFS-type transporter olcL from Penicillium canescens.